A 265-amino-acid chain; its full sequence is Novel plant SNARE 11 (265 aa).

Residues 1-215 are Cytoplasmic-facing; it reads MDPISAVSEE…IGRQVATDKC (215 aa). A coiled-coil region spans residues 30-75; it reads QKLEKIKDANRQSRQLEELTDKMRDCKSLIKDFDREIKSLESGNDA. Residues 144–206 enclose the t-SNARE coiled-coil homology domain; that stretch reads NSMMDDTDQA…KKASKLVKEI (63 aa). Residues 216 to 236 traverse the membrane as a helical; Anchor for type IV membrane protein segment; the sequence is IMAFLFLIVIGVIAIIIVKIV. The Vesicular segment spans residues 237–265; that stretch reads NPNNKDIRDIPGVGLAPPAMNRRLLWNHY.

The protein belongs to the novel plant SNARE family. As to quaternary structure, interacts with KNOLLE to form a t-SNARE complex. Does not interact with SYP21, VTI12 or VPS45. As to expression, expressed in roots, stems, flower, siliques, expanding leaves, but not in mature leaves. Not limited to dividing cells.

The protein resides in the membrane. Functionally, t-SNARE involved in diverse vesicle trafficking and membrane fusion processes, including cell plate formation. In Arabidopsis thaliana (Mouse-ear cress), this protein is Novel plant SNARE 11 (NPSN11).